The sequence spans 320 residues: MRSAQVYRWQIPMDAGVVLRDRRLKTRDGLYVCLREGEREGWGEISPLPGFSQETWEEAQSVLLAWVNNWLAGDCELPQMPSVAFGVSCALAELADTLPQAANYRAAPLCNGDPDDLILKLADMPGEKVAKVKVGLYEAVRDGMVVNLLLEAIPDLHLRLDANRAWTPLKGQQFAKYVNPDYRHRIAFLEEPCKTRDDSRAFARETGIAIAWDESLREPDFAFVAEEGVRAVVIKPTLTGSLEKVREQVQAAHALGLTAVISSSIESSLGLTQLARIAAWLTPDTIPGLDTLDLMQAQQVRRWPGSTLPVVEVDALERLL.

Lys133 serves as the catalytic Proton donor. Residues Asp161, Glu190, and Asp213 each contribute to the Mg(2+) site. Catalysis depends on Lys235, which acts as the Proton acceptor.

The protein belongs to the mandelate racemase/muconate lactonizing enzyme family. MenC type 1 subfamily. It depends on a divalent metal cation as a cofactor.

The enzyme catalyses (1R,6R)-6-hydroxy-2-succinyl-cyclohexa-2,4-diene-1-carboxylate = 2-succinylbenzoate + H2O. It participates in quinol/quinone metabolism; 1,4-dihydroxy-2-naphthoate biosynthesis; 1,4-dihydroxy-2-naphthoate from chorismate: step 4/7. It functions in the pathway quinol/quinone metabolism; menaquinone biosynthesis. Its function is as follows. Converts 2-succinyl-6-hydroxy-2,4-cyclohexadiene-1-carboxylate (SHCHC) to 2-succinylbenzoate (OSB). This chain is o-succinylbenzoate synthase, found in Escherichia coli O139:H28 (strain E24377A / ETEC).